Consider the following 660-residue polypeptide: UvrABC system protein B (660 aa).

Residues 26-196 (DGIDEKKEHQ…ELNKGQFDVK (171 aa)) form the Helicase ATP-binding domain. Position 39–46 (39–46 (GVTGSGKT)) interacts with ATP. The short motif at 92–115 (YFDFYKPEAYIPKSDLYIEKTSKN) is the Beta-hairpin element. A Helicase C-terminal domain is found at 431–593 (QIEDIYDHLK…IIPKTIVKPI (163 aa)). The region spanning 622-657 (KKFIDQMVRKMTQLAKANKFEEAIEIRDYLIEIGIE) is the UVR domain.

This sequence belongs to the UvrB family. Forms a heterotetramer with UvrA during the search for lesions. Interacts with UvrC in an incision complex.

The protein localises to the cytoplasm. The UvrABC repair system catalyzes the recognition and processing of DNA lesions. A damage recognition complex composed of 2 UvrA and 2 UvrB subunits scans DNA for abnormalities. Upon binding of the UvrA(2)B(2) complex to a putative damaged site, the DNA wraps around one UvrB monomer. DNA wrap is dependent on ATP binding by UvrB and probably causes local melting of the DNA helix, facilitating insertion of UvrB beta-hairpin between the DNA strands. Then UvrB probes one DNA strand for the presence of a lesion. If a lesion is found the UvrA subunits dissociate and the UvrB-DNA preincision complex is formed. This complex is subsequently bound by UvrC and the second UvrB is released. If no lesion is found, the DNA wraps around the other UvrB subunit that will check the other stand for damage. In Metamycoplasma arthritidis (strain 158L3-1) (Mycoplasma arthritidis), this protein is UvrABC system protein B.